Here is a 364-residue protein sequence, read N- to C-terminus: Dual-specificity RNA methyltransferase RlmN (364 aa).

Glutamate 91 (proton acceptor) is an active-site residue. The Radical SAM core domain occupies 97 to 333; that stretch reads ESDRGTLCIS…VTVRKTRGDD (237 aa). A disulfide bond links cysteine 104 and cysteine 338. [4Fe-4S] cluster-binding residues include cysteine 111, cysteine 115, and cysteine 118. Residues 164 to 165, serine 196, 218 to 220, and asparagine 295 contribute to the S-adenosyl-L-methionine site; these read GE and SLH. Cysteine 338 (S-methylcysteine intermediate) is an active-site residue.

The protein belongs to the radical SAM superfamily. RlmN family. [4Fe-4S] cluster serves as cofactor.

It localises to the cytoplasm. The catalysed reaction is adenosine(2503) in 23S rRNA + 2 reduced [2Fe-2S]-[ferredoxin] + 2 S-adenosyl-L-methionine = 2-methyladenosine(2503) in 23S rRNA + 5'-deoxyadenosine + L-methionine + 2 oxidized [2Fe-2S]-[ferredoxin] + S-adenosyl-L-homocysteine. The enzyme catalyses adenosine(37) in tRNA + 2 reduced [2Fe-2S]-[ferredoxin] + 2 S-adenosyl-L-methionine = 2-methyladenosine(37) in tRNA + 5'-deoxyadenosine + L-methionine + 2 oxidized [2Fe-2S]-[ferredoxin] + S-adenosyl-L-homocysteine. In terms of biological role, specifically methylates position 2 of adenine 2503 in 23S rRNA and position 2 of adenine 37 in tRNAs. m2A2503 modification seems to play a crucial role in the proofreading step occurring at the peptidyl transferase center and thus would serve to optimize ribosomal fidelity. This chain is Dual-specificity RNA methyltransferase RlmN, found in Neisseria meningitidis serogroup C (strain 053442).